The following is a 445-amino-acid chain: Vacuolar fusion protein CCZ1 homolog (445 aa).

The protein belongs to the CCZ1 family.

This Dictyostelium discoideum (Social amoeba) protein is Vacuolar fusion protein CCZ1 homolog.